The sequence spans 132 residues: Small ribosomal subunit protein uS8 (132 aa).

It belongs to the universal ribosomal protein uS8 family. As to quaternary structure, part of the 30S ribosomal subunit. Contacts proteins S5 and S12.

In terms of biological role, one of the primary rRNA binding proteins, it binds directly to 16S rRNA central domain where it helps coordinate assembly of the platform of the 30S subunit. The chain is Small ribosomal subunit protein uS8 from Staphylococcus epidermidis (strain ATCC 35984 / DSM 28319 / BCRC 17069 / CCUG 31568 / BM 3577 / RP62A).